Consider the following 133-residue polypeptide: MAPNDTISDMLTRIRNACAVRHPTTQVPTTKMTRSIAQVLKEEGFIEGFEETGEGVQKYLVLTLKYKDKNRQPIINMLKRVSKPGLRVYSNCKDLPRVLGGIGIAIVSTSKGIMTDREARRQNVGGEILCYIW.

The protein belongs to the universal ribosomal protein uS8 family. In terms of assembly, part of the 30S ribosomal subunit. Contacts proteins S5 and S12.

Its function is as follows. One of the primary rRNA binding proteins, it binds directly to 16S rRNA central domain where it helps coordinate assembly of the platform of the 30S subunit. This is Small ribosomal subunit protein uS8 from Rippkaea orientalis (strain PCC 8801 / RF-1) (Cyanothece sp. (strain PCC 8801)).